Here is a 142-residue protein sequence, read N- to C-terminus: Large ribosomal subunit protein uL13 (142 aa).

It belongs to the universal ribosomal protein uL13 family. Part of the 50S ribosomal subunit.

Its function is as follows. This protein is one of the early assembly proteins of the 50S ribosomal subunit, although it is not seen to bind rRNA by itself. It is important during the early stages of 50S assembly. In Yersinia pseudotuberculosis serotype O:1b (strain IP 31758), this protein is Large ribosomal subunit protein uL13.